The primary structure comprises 539 residues: Phenylacetyl-CoA ligase epaB (539 aa).

188–199 (RLFSSGTTGLPK) serves as a coordination point for AMP. Residues 449 to 525 (EVEGVLRNHP…DAIPRNASGK (77 aa)) form an AMP-binding region.

The protein belongs to the ATP-dependent AMP-binding enzyme family.

Its pathway is secondary metabolite biosynthesis. Phenylacetyl-CoA ligase; part of the gene cluster that mediates the biosynthesis of nigerpyrone and its derivatives carbonarone A and pestalamide A. The biosynthesis pathway begins with the polyketide assembly by epaA to form phenylacetyl triketide precursor from successive condensation of two malonyl-CoA, presumably with one phenylacetyl-CoA starter unit produced by the phenylacetyl-CoA ligase epaB. For the nigerpyrone biosynthesis, the reactive polyketide chain is released as an aldehyde through the R-domain. A nonenzymatic cyclization and dehydration may create nigerpyrone. For the biosynthesis of carbonarone A and pestalamide A, an extra methyl group is added through the C-methyltransferase domain. Several further steps involving the dehydrogenase orf1, the cytochrome P450 monooxygenase orf2 and the FAD-dependent monooxygenase orf3 are required to form a carbonarone A precursor which is converted to carbonarone A via cyclization. The O-acetyltransferase epaC could catalyze the transfer of 2-methylsuccinyl-CoA, a common intermediate in the ethylmalonyl-CoA pathway, to generate the final product pestalamide A. In Aspergillus niger (strain ATCC MYA-4892 / CBS 513.88 / FGSC A1513), this protein is Phenylacetyl-CoA ligase epaB.